A 147-amino-acid polypeptide reads, in one-letter code: Large ribosomal subunit protein uL15 (147 aa).

Residues 1–12 show a composition bias toward basic and acidic residues; the sequence is MTLRLNDLKPAD. A disordered region spans residues 1 to 61; the sequence is MTLRLNDLKP…GFEGGQTPMQ (61 aa). Residues 23–33 show a composition bias toward gly residues; it reads RGIGSGLGKTA. Basic residues predominate over residues 34 to 47; that stretch reads GRGHKGSFARKGGG.

The protein belongs to the universal ribosomal protein uL15 family. As to quaternary structure, part of the 50S ribosomal subunit.

Binds to the 23S rRNA. The protein is Large ribosomal subunit protein uL15 of Xanthomonas oryzae pv. oryzae (strain MAFF 311018).